The following is a 144-amino-acid chain: AP-4 complex subunit sigma-1 (144 aa).

The protein belongs to the adaptor complexes small subunit family. As to quaternary structure, adaptor protein complex 4 (AP-4) is a heterotetramer composed of two large adaptins (epsilon-type subunit AP4E1 and beta-type subunit AP4B1), a medium adaptin (mu-type subunit AP4M1) and a small adaptin (sigma-type AP4S1). As to expression, widely expressed.

It is found in the golgi apparatus. Its subcellular location is the trans-Golgi network membrane. Component of the adaptor protein complex 4 (AP-4). Adaptor protein complexes are vesicle coat components involved both in vesicle formation and cargo selection. They control the vesicular transport of proteins in different trafficking pathways. AP-4 forms a non clathrin-associated coat on vesicles departing the trans-Golgi network (TGN) and may be involved in the targeting of proteins from the trans-Golgi network (TGN) to the endosomal-lysosomal system. It is also involved in protein sorting to the basolateral membrane in epithelial cells and the proper asymmetric localization of somatodendritic proteins in neurons. AP-4 is involved in the recognition and binding of tyrosine-based sorting signals found in the cytoplasmic part of cargos, but may also recognize other types of sorting signal. The protein is AP-4 complex subunit sigma-1 of Homo sapiens (Human).